Here is a 256-residue protein sequence, read N- to C-terminus: MVALRLIPCLDVSNGRVVKGVNFVGLRDAGDPVELGCRYSKAGADELVFLDITATHEKRSTLVDMVRRTSEAVTIPFTVGGGISSLNGINELLRAGADKVSLNSSAVKDPSLISQGANRFGSQCIVVAIDAKKNKHIPNKWDVYVSGGRKNTGLDAIEWAEKIFEMGAGEILLTSMDGDGTQNGYDIELTRCISEKVSIPVIASGGAGSLSHIKDAFTLGKSSAALLASLLHDGQLTIREIKEYLIKENLPIRPIE.

Active-site residues include D11 and D130.

Belongs to the HisA/HisF family. In terms of assembly, heterodimer of HisH and HisF.

The protein localises to the cytoplasm. It carries out the reaction 5-[(5-phospho-1-deoxy-D-ribulos-1-ylimino)methylamino]-1-(5-phospho-beta-D-ribosyl)imidazole-4-carboxamide + L-glutamine = D-erythro-1-(imidazol-4-yl)glycerol 3-phosphate + 5-amino-1-(5-phospho-beta-D-ribosyl)imidazole-4-carboxamide + L-glutamate + H(+). It functions in the pathway amino-acid biosynthesis; L-histidine biosynthesis; L-histidine from 5-phospho-alpha-D-ribose 1-diphosphate: step 5/9. Its function is as follows. IGPS catalyzes the conversion of PRFAR and glutamine to IGP, AICAR and glutamate. The HisF subunit catalyzes the cyclization activity that produces IGP and AICAR from PRFAR using the ammonia provided by the HisH subunit. This chain is Imidazole glycerol phosphate synthase subunit HisF, found in Prochlorococcus marinus (strain NATL1A).